The following is a 158-amino-acid chain: MQGRLSAWLVKHGLVHRSLGFDYQGIETLQIKPEDWHSIAVISYVYGYNYLRSQCAYDVAPGGLLASVYHLTRIQYGVDQPEEVCIKVFAPRRNPRIPSVFWIWKSADFQERESYDMLGISYDNHPRLKRILMPESWIGWPLRKDYIAPNFYEIQDAH.

The protein belongs to the complex I 30 kDa subunit family. NDH is composed of at least 16 different subunits, 5 of which are encoded in the nucleus.

The protein resides in the plastid. The protein localises to the chloroplast thylakoid membrane. The enzyme catalyses a plastoquinone + NADH + (n+1) H(+)(in) = a plastoquinol + NAD(+) + n H(+)(out). It carries out the reaction a plastoquinone + NADPH + (n+1) H(+)(in) = a plastoquinol + NADP(+) + n H(+)(out). In terms of biological role, NDH shuttles electrons from NAD(P)H:plastoquinone, via FMN and iron-sulfur (Fe-S) centers, to quinones in the photosynthetic chain and possibly in a chloroplast respiratory chain. The immediate electron acceptor for the enzyme in this species is believed to be plastoquinone. Couples the redox reaction to proton translocation, and thus conserves the redox energy in a proton gradient. This chain is NAD(P)H-quinone oxidoreductase subunit J, chloroplastic, found in Nandina domestica (Heavenly bamboo).